Reading from the N-terminus, the 429-residue chain is Inner membrane transport protein RhmT (429 aa).

Residues 1 to 16 (MSTALLDAVVKKNRVR) lie on the Cytoplasmic side of the membrane. Residues 17–37 (LIPFMLALYVLAFLDRSNIGF) traverse the membrane as a helical segment. Residues 38–54 (AKQTYQIDTGLSNEAYA) are Periplasmic-facing. Residues 55–75 (LGAGIFFVVYAFLGVPANLLM) traverse the membrane as a helical segment. At 76–81 (RKLGAR) the chain is on the cytoplasmic side. The helical transmembrane segment at 82 to 102 (TWIGTTTLLWGFLSAAMAWAD) threads the bilayer. The Periplasmic portion of the chain corresponds to 103–143 (TEAKFLIVRTLLRAAEAGFFPGMIYLTSQWFPQRNRASIMG). The helical transmembrane segment at 144–164 (LFYMGAPLALTLGSPLSGALL) threads the bilayer. Over 165 to 174 (EMHGFMGHPG) the chain is Cytoplasmic. The chain crosses the membrane as a helical span at residues 175-195 (WFWMFVIEGLLAVGAGVFTFF). Residues 196–242 (WLDDTPEQARFLSKQEKTLLINQLASEEQQKVTSRLSDALRNGRVWQ) lie on the Periplasmic side of the membrane. The helical transmembrane segment at 243-263 (LAIIYLTIQVAVYGLIFFLPT) threads the bilayer. Topologically, residues 264–274 (QVAALLGTKVG) are cytoplasmic. The chain crosses the membrane as a helical span at residues 275 to 295 (FTASVVTAIPWVAALFGTWLI). Topologically, residues 296 to 324 (PRYSDKTGERRNVAALTLLAAGIGIGLSG) are periplasmic. A helical transmembrane segment spans residues 325-345 (LLSPVMAIVALCVAAIGFIAV). Topologically, residues 346–361 (QPVFWTMPTQLLSGTA) are cytoplasmic. A helical membrane pass occupies residues 362–382 (LAAGIGFVNLFGAVGGFIAPI). At 383–394 (LRVKAETLFASD) the chain is on the periplasmic side. The chain crosses the membrane as a helical span at residues 395-415 (AAGLLTLAAVAVIGSLIIFTL). Residues 416 to 429 (RVNRTVAQTDVAHH) are Cytoplasmic-facing.

The protein belongs to the major facilitator superfamily. Phthalate permease family.

The protein resides in the cell inner membrane. This chain is Inner membrane transport protein RhmT (rhmT), found in Escherichia coli (strain K12).